A 550-amino-acid polypeptide reads, in one-letter code: NAD(P)H-quinone oxidoreductase chain 4 3 (550 aa).

The next 14 membrane-spanning stretches (helical) occupy residues phenylalanine 5 to leucine 25, tyrosine 36 to phenylalanine 56, isoleucine 86 to tryptophan 106, leucine 114 to aspartate 134, leucine 135 to isoleucine 155, phenylalanine 168 to leucine 188, methionine 212 to histidine 232, serine 243 to methionine 263, phenylalanine 277 to phenylalanine 297, valine 311 to glycine 331, alanine 332 to valine 352, valine 375 to phenylalanine 395, isoleucine 418 to leucine 438, and isoleucine 489 to leucine 509.

The protein belongs to the complex I subunit 4 family.

It localises to the cellular thylakoid membrane. It catalyses the reaction a plastoquinone + NADH + (n+1) H(+)(in) = a plastoquinol + NAD(+) + n H(+)(out). The catalysed reaction is a plastoquinone + NADPH + (n+1) H(+)(in) = a plastoquinol + NADP(+) + n H(+)(out). Functionally, NDH-1 shuttles electrons from NAD(P)H, via FMN and iron-sulfur (Fe-S) centers, to quinones in the respiratory chain. The immediate electron acceptor for the enzyme in this species is believed to be plastoquinone. Couples the redox reaction to proton translocation (for every two electrons transferred, four hydrogen ions are translocated across the cytoplasmic membrane), and thus conserves the redox energy in a proton gradient. In Picosynechococcus sp. (strain ATCC 27264 / PCC 7002 / PR-6) (Agmenellum quadruplicatum), this protein is NAD(P)H-quinone oxidoreductase chain 4 3.